The following is a 294-amino-acid chain: Elongation factor Ts (294 aa).

The tract at residues T79–V82 is involved in Mg(2+) ion dislocation from EF-Tu.

The protein belongs to the EF-Ts family.

The protein resides in the cytoplasm. Its function is as follows. Associates with the EF-Tu.GDP complex and induces the exchange of GDP to GTP. It remains bound to the aminoacyl-tRNA.EF-Tu.GTP complex up to the GTP hydrolysis stage on the ribosome. This Geobacillus thermodenitrificans (strain NG80-2) protein is Elongation factor Ts.